Consider the following 1088-residue polypeptide: DNA-directed RNA polymerase subunit beta (1088 aa).

This sequence belongs to the RNA polymerase beta chain family. As to quaternary structure, in plastids the minimal PEP RNA polymerase catalytic core is composed of four subunits: alpha, beta, beta', and beta''. When a (nuclear-encoded) sigma factor is associated with the core the holoenzyme is formed, which can initiate transcription.

The protein localises to the plastid. Its subcellular location is the chloroplast. The enzyme catalyses RNA(n) + a ribonucleoside 5'-triphosphate = RNA(n+1) + diphosphate. DNA-dependent RNA polymerase catalyzes the transcription of DNA into RNA using the four ribonucleoside triphosphates as substrates. The polypeptide is DNA-directed RNA polymerase subunit beta (Chlorokybus atmophyticus (Soil alga)).